The following is a 707-amino-acid chain: Translation initiation factor IF-2 (707 aa).

A compositionally biased stretch (basic and acidic residues) spans 55-80 (LAEKPKEEKQKDQKNHEQEAQDKEEK). Residues 55 to 88 (LAEKPKEEKQKDQKNHEQEAQDKEEKEIEEDSFY) are disordered. One can recognise a tr-type G domain in the interval 209–378 (PRPPIVTVMG…LLVAEMEDLK (170 aa)). The tract at residues 218–225 (GHVDHGKT) is G1. 218 to 225 (GHVDHGKT) serves as a coordination point for GTP. Positions 243–247 (GITQH) are G2. Residues 264 to 267 (DTPG) form a G3 region. Residues 264–268 (DTPGH) and 318–321 (NKID) each bind GTP. Positions 318–321 (NKID) are G4. The segment at 354-356 (SAK) is G5.

Belongs to the TRAFAC class translation factor GTPase superfamily. Classic translation factor GTPase family. IF-2 subfamily.

It localises to the cytoplasm. One of the essential components for the initiation of protein synthesis. Protects formylmethionyl-tRNA from spontaneous hydrolysis and promotes its binding to the 30S ribosomal subunits. Also involved in the hydrolysis of GTP during the formation of the 70S ribosomal complex. This chain is Translation initiation factor IF-2, found in Caldanaerobacter subterraneus subsp. tengcongensis (strain DSM 15242 / JCM 11007 / NBRC 100824 / MB4) (Thermoanaerobacter tengcongensis).